A 307-amino-acid chain; its full sequence is UDP-3-O-acyl-N-acetylglucosamine deacetylase (307 aa).

Residues His-80, His-239, and Asp-243 each coordinate Zn(2+). The active-site Proton donor is His-266.

This sequence belongs to the LpxC family. Zn(2+) serves as cofactor.

The catalysed reaction is a UDP-3-O-[(3R)-3-hydroxyacyl]-N-acetyl-alpha-D-glucosamine + H2O = a UDP-3-O-[(3R)-3-hydroxyacyl]-alpha-D-glucosamine + acetate. It participates in glycolipid biosynthesis; lipid IV(A) biosynthesis; lipid IV(A) from (3R)-3-hydroxytetradecanoyl-[acyl-carrier-protein] and UDP-N-acetyl-alpha-D-glucosamine: step 2/6. Functionally, catalyzes the hydrolysis of UDP-3-O-myristoyl-N-acetylglucosamine to form UDP-3-O-myristoylglucosamine and acetate, the committed step in lipid A biosynthesis. The polypeptide is UDP-3-O-acyl-N-acetylglucosamine deacetylase (Neisseria meningitidis serogroup A / serotype 4A (strain DSM 15465 / Z2491)).